The primary structure comprises 217 residues: MKLFIDTANINEIKEAYSWGIICGVTTNPSLIAKEGRDFKEVVNEICSIVDGPISAEVISLKAEGMIEEARDLAKIHKNVVIKIPMTTEGLKAVSVLSKEGIKTNVTLIFSAAQALLAAKAGATYVSPFVGRLDDIGQNGIELIKEIVQIFRNYPDIKTEIIAASIRHPIHVIEAAKAGADIATVPFKVLEQMTKHALTDIGIERFLKDWEKVPKKN.

Lysine 83 functions as the Schiff-base intermediate with substrate in the catalytic mechanism.

It belongs to the transaldolase family. Type 3B subfamily.

It is found in the cytoplasm. The enzyme catalyses D-sedoheptulose 7-phosphate + D-glyceraldehyde 3-phosphate = D-erythrose 4-phosphate + beta-D-fructose 6-phosphate. It functions in the pathway carbohydrate degradation; pentose phosphate pathway; D-glyceraldehyde 3-phosphate and beta-D-fructose 6-phosphate from D-ribose 5-phosphate and D-xylulose 5-phosphate (non-oxidative stage): step 2/3. Its function is as follows. Transaldolase is important for the balance of metabolites in the pentose-phosphate pathway. This chain is Probable transaldolase, found in Caldicellulosiruptor saccharolyticus (strain ATCC 43494 / DSM 8903 / Tp8T 6331).